The chain runs to 414 residues: Acetate kinase (414 aa).

N7 is a Mg(2+) binding site. K14 lines the ATP pocket. R99 contacts substrate. The Proton donor/acceptor role is filled by D157. Residues 217-221 (HLGNG) and 341-345 (GIGEN) each bind ATP. E395 contributes to the Mg(2+) binding site.

It belongs to the acetokinase family. In terms of assembly, homodimer. Requires Mg(2+) as cofactor. Mn(2+) is required as a cofactor.

It is found in the cytoplasm. The catalysed reaction is acetate + ATP = acetyl phosphate + ADP. Its pathway is metabolic intermediate biosynthesis; acetyl-CoA biosynthesis; acetyl-CoA from acetate: step 1/2. Functionally, catalyzes the formation of acetyl phosphate from acetate and ATP. Can also catalyze the reverse reaction. The chain is Acetate kinase from Solibacter usitatus (strain Ellin6076).